A 417-amino-acid polypeptide reads, in one-letter code: MFTKQSLVTLLGGLSLAVAQTTTEGYPSLAEIRAAQATVQPYSPVSNVKGLTFNRFVNIWLENTDFDAAAATEHLPVLAKKGLLLNNFWAVTHPSEPNYCRHLPLGDTFGMDNDDFHQIPSNVSTIADLFDTKNIAWGEYQEGLPYPGYQGYRYPESGANDYVRNRNPLILFDSVTEDALRLRQIKNFSSFYDDLENHRLPQYMFITPNMTNDGHDTNITFSGDWTWGFLSELLENDYFTKDTLIMLTFDETGTYEIGNNIYTFLLGGAVPDDLLGTKDDTFYTHYSVIASLSTNWGLPSLGRWDCGANLFSWLAKKTGYVNYEVDTSNLYMNETHWGPLSDDDYSEYYAGWPVPTTDASCSAGNGILSTVKKTYEGLTATFNYTTPFPYDSRSGNNVGVKYSRTLKNGKVESGTSE.

A signal peptide spans 1–19; that stretch reads MFTKQSLVTLLGGLSLAVA. 3 N-linked (GlcNAc...) asparagine glycosylation sites follow: Asn122, Asn187, and Asn209. Residue Asp216 is the Proton donor of the active site. Asn218, Asn333, and Asn383 each carry an N-linked (GlcNAc...) asparagine glycan.

In terms of processing, the N-terminus is blocked.

The protein localises to the secreted. The catalysed reaction is a phosphate monoester + H2O = an alcohol + phosphate. The sequence is that of Acid phosphatase (phoA) from Aspergillus niger.